The following is a 151-amino-acid chain: U-scoloptoxin(17)-Er2a (151 aa).

The N-terminal stretch at 1 to 22 (MKSFFVVFAIVFQATLVALSLA) is a signal peptide.

Belongs to the scoloptoxin-17 family. Contains 5 disulfide bonds. As to expression, expressed by the venom gland.

It localises to the secreted. This Ethmostigmus rubripes (Giant centipede) protein is U-scoloptoxin(17)-Er2a.